Consider the following 519-residue polypeptide: Cytochrome P450 CYP99A1 (519 aa).

Cys453 lines the heme pocket.

This sequence belongs to the cytochrome P450 family. The cofactor is heme.

The protein resides in the membrane. This Sorghum bicolor (Sorghum) protein is Cytochrome P450 CYP99A1 (CYP99A1).